The primary structure comprises 86 residues: Cell division topological specificity factor (86 aa).

The protein belongs to the MinE family.

Its function is as follows. Prevents the cell division inhibition by proteins MinC and MinD at internal division sites while permitting inhibition at polar sites. This ensures cell division at the proper site by restricting the formation of a division septum at the midpoint of the long axis of the cell. This chain is Cell division topological specificity factor, found in Bordetella petrii (strain ATCC BAA-461 / DSM 12804 / CCUG 43448).